The primary structure comprises 1273 residues: Kinesin-like protein KIN-14A (1273 aa).

Residues 1-52 are disordered; the sequence is MADQRSKTNRWNWEVSGFEPRKSSSNASFAESTGHRTTGPLLRRNSISTPSL. Residues 59–89 are a coiled coil; that stretch reads ASKVNGLKEKVKLAKEDYLELRQEATDLQEY. Positions 142–456 constitute a Kinesin motor domain; the sequence is NIKVFCRARP…LNYAARARNT (315 aa). Residue 223–230 coordinates ATP; it reads GQTNAGKT. 3 coiled-coil regions span residues 466–511, 559–595, and 627–657; these read IKKW…CVLL, QLDQEQKLQMQQQDSAIQNLQAKITDLESQVSEAVRS, and TKKLEEELKKRDALIERLHEENEKLFDRLTE. 2 disordered regions span residues 827 to 847 and 1136 to 1157; these read KPNTGRSKSTSRGSSPGRSPV and QEDTNILEQSHDRRPSLESISS. The segment covering 830–846 has biased composition (low complexity); that stretch reads TGRSKSTSRGSSPGRSP.

Belongs to the TRAFAC class myosin-kinesin ATPase superfamily. Kinesin family. KIN-14 subfamily. Homodimer and heterodimer with KCA2. Interacts with CDKA-1. Interacts with AL1, a geminivirus (TGMV) protein essential for viral replication. Interacts with LUE1/KSS. Post-translationally, part of the phosphorylation is not CDK-dependent. In terms of tissue distribution, widely expressed.

It is found in the nucleus. The protein resides in the cytoplasm. It localises to the cytoskeleton. The protein localises to the spindle. Its subcellular location is the chromosome. It is found in the cell membrane. The protein resides in the phragmoplast. Functionally, kinesin-like protein required for chloroplast movements and anchor to the plasma membrane. Mediates chloroplast movement via chloroplast actin (cp-actin) filaments. Required for the chloroplast avoidance response under high intensity blue light. Mediates redundantly with CHUP1 the nuclear avoidance response under high intensity blue light. May act as a mitotic kinesin. Probably involved in division plane determination. The protein is Kinesin-like protein KIN-14A of Arabidopsis thaliana (Mouse-ear cress).